A 146-amino-acid chain; its full sequence is Large ribosomal subunit protein uL15 (146 aa).

The segment covering 1 to 13 (MKLHELKAAEGSR) has biased composition (basic and acidic residues). Residues 1–51 (MKLHELKAAEGSRKVRNRVGRGTSSGNGKTSGRGQKGQKARSGGGVRLGFE) form a disordered region. 2 stretches are compositionally biased toward gly residues: residues 23 to 35 (TSSG…GRGQ) and 42 to 51 (SGGGVRLGFE).

This sequence belongs to the universal ribosomal protein uL15 family. In terms of assembly, part of the 50S ribosomal subunit.

Functionally, binds to the 23S rRNA. The polypeptide is Large ribosomal subunit protein uL15 (Streptococcus pyogenes serotype M1).